A 173-amino-acid polypeptide reads, in one-letter code: Crossover junction endodeoxyribonuclease RuvC (173 aa).

Active-site residues include Asp8, Glu67, and Asp139. Asp8, Glu67, and Asp139 together coordinate Mg(2+).

The protein belongs to the RuvC family. In terms of assembly, homodimer which binds Holliday junction (HJ) DNA. The HJ becomes 2-fold symmetrical on binding to RuvC with unstacked arms; it has a different conformation from HJ DNA in complex with RuvA. In the full resolvosome a probable DNA-RuvA(4)-RuvB(12)-RuvC(2) complex forms which resolves the HJ. Requires Mg(2+) as cofactor.

It is found in the cytoplasm. It catalyses the reaction Endonucleolytic cleavage at a junction such as a reciprocal single-stranded crossover between two homologous DNA duplexes (Holliday junction).. Functionally, the RuvA-RuvB-RuvC complex processes Holliday junction (HJ) DNA during genetic recombination and DNA repair. Endonuclease that resolves HJ intermediates. Cleaves cruciform DNA by making single-stranded nicks across the HJ at symmetrical positions within the homologous arms, yielding a 5'-phosphate and a 3'-hydroxyl group; requires a central core of homology in the junction. The consensus cleavage sequence is 5'-(A/T)TT(C/G)-3'. Cleavage occurs on the 3'-side of the TT dinucleotide at the point of strand exchange. HJ branch migration catalyzed by RuvA-RuvB allows RuvC to scan DNA until it finds its consensus sequence, where it cleaves and resolves the cruciform DNA. The chain is Crossover junction endodeoxyribonuclease RuvC from Aeromonas hydrophila subsp. hydrophila (strain ATCC 7966 / DSM 30187 / BCRC 13018 / CCUG 14551 / JCM 1027 / KCTC 2358 / NCIMB 9240 / NCTC 8049).